We begin with the raw amino-acid sequence, 69 residues long: DNA-directed RNA polymerase subunit omega (69 aa).

It belongs to the RNA polymerase subunit omega family. As to quaternary structure, the RNAP catalytic core consists of 2 alpha, 1 beta, 1 beta' and 1 omega subunit. When a sigma factor is associated with the core the holoenzyme is formed, which can initiate transcription.

The catalysed reaction is RNA(n) + a ribonucleoside 5'-triphosphate = RNA(n+1) + diphosphate. Its function is as follows. Promotes RNA polymerase assembly. Latches the N- and C-terminal regions of the beta' subunit thereby facilitating its interaction with the beta and alpha subunits. This chain is DNA-directed RNA polymerase subunit omega, found in Carboxydothermus hydrogenoformans (strain ATCC BAA-161 / DSM 6008 / Z-2901).